The following is a 206-amino-acid chain: MKRPLIIGVGGPVGAGKTMLIERLTRYLSTKGYSMAAITNDIYTKEDARILLNTSVLPADRIAGVETGGCPHTAIREDASMNFAAIEEMCDKHPDLQLLFLESGGDNLSATFSPDLVDFSIYIIDVAQGEKIPRKGGQGMIKSDLFIINKVDLAPYVGANVEVMKADTLKSRGNKDFFVTNLKTDEGLKSVADWIEKRLQLALLEE.

11-18 provides a ligand contact to GTP; it reads GPVGAGKT.

This sequence belongs to the SIMIBI class G3E GTPase family. UreG subfamily. In terms of assembly, homodimer. UreD, UreF and UreG form a complex that acts as a GTP-hydrolysis-dependent molecular chaperone, activating the urease apoprotein by helping to assemble the nickel containing metallocenter of UreC. The UreE protein probably delivers the nickel.

It is found in the cytoplasm. Functionally, facilitates the functional incorporation of the urease nickel metallocenter. This process requires GTP hydrolysis, probably effectuated by UreG. This is Urease accessory protein UreG from Ureaplasma parvum serovar 3 (strain ATCC 700970).